The primary structure comprises 376 residues: Putative glutamate--cysteine ligase 2 (376 aa).

It belongs to the glutamate--cysteine ligase type 2 family. YbdK subfamily.

The catalysed reaction is L-cysteine + L-glutamate + ATP = gamma-L-glutamyl-L-cysteine + ADP + phosphate + H(+). In terms of biological role, ATP-dependent carboxylate-amine ligase which exhibits weak glutamate--cysteine ligase activity. This is Putative glutamate--cysteine ligase 2 from Paracoccus denitrificans (strain Pd 1222).